We begin with the raw amino-acid sequence, 352 residues long: Ribosome biogenesis protein BRX1 homolog (352 aa).

The interval 1 to 55 (MGKFSKIKKVQEEESAHQKMEWEAAGAKDSSSDDSSDESDNDDQPKQATEETRKR) is disordered. A compositionally biased stretch (basic and acidic residues) spans 9-22 (KVQEEESAHQKMEW). The span at 32–42 (SDDSSDESDND) shows a compositional bias: acidic residues. Over residues 43–55 (DQPKQATEETRKR) the composition is skewed to basic and acidic residues. The region spanning 63-253 (ERVLVLCSRG…MVRLFAGSFE (191 aa)) is the Brix domain.

This sequence belongs to the BRX1 family.

Its subcellular location is the nucleus. It is found in the nucleolus. Required for biogenesis of the 60S ribosomal subunit. The polypeptide is Ribosome biogenesis protein BRX1 homolog (Caenorhabditis elegans).